A 579-amino-acid chain; its full sequence is CTP synthase (579 aa).

An amidoligase domain region spans residues 1-281 (MPALRKHPQT…DAYVVRRLNL (281 aa)). Serine 23 contacts CTP. UTP is bound at residue serine 23. ATP-binding positions include 24–29 (SLGKGL) and aspartate 81. The Mg(2+) site is built by aspartate 81 and glutamate 155. CTP contacts are provided by residues 162–164 (DIE), 202–207 (KTKPTQ), and lysine 238. Residues 202 to 207 (KTKPTQ) and lysine 238 each bind UTP. One can recognise a Glutamine amidotransferase type-1 domain in the interval 306–554 (RIALVGKYID…IGAALDYKAA (249 aa)). Glycine 369 contributes to the L-glutamine binding site. Cysteine 396 serves as the catalytic Nucleophile; for glutamine hydrolysis. L-glutamine-binding positions include 397 to 400 (LGLQ), glutamate 419, and arginine 480. Catalysis depends on residues histidine 527 and glutamate 529.

The protein belongs to the CTP synthase family. As to quaternary structure, homotetramer.

The enzyme catalyses UTP + L-glutamine + ATP + H2O = CTP + L-glutamate + ADP + phosphate + 2 H(+). It catalyses the reaction L-glutamine + H2O = L-glutamate + NH4(+). It carries out the reaction UTP + NH4(+) + ATP = CTP + ADP + phosphate + 2 H(+). It participates in pyrimidine metabolism; CTP biosynthesis via de novo pathway; CTP from UDP: step 2/2. With respect to regulation, allosterically activated by GTP, when glutamine is the substrate; GTP has no effect on the reaction when ammonia is the substrate. The allosteric effector GTP functions by stabilizing the protein conformation that binds the tetrahedral intermediate(s) formed during glutamine hydrolysis. Inhibited by the product CTP, via allosteric rather than competitive inhibition. Its function is as follows. Catalyzes the ATP-dependent amination of UTP to CTP with either L-glutamine or ammonia as the source of nitrogen. Regulates intracellular CTP levels through interactions with the four ribonucleotide triphosphates. The polypeptide is CTP synthase (Mycobacterium sp. (strain JLS)).